The following is a 155-amino-acid chain: 6,7-dimethyl-8-ribityllumazine synthase (155 aa).

Residues F22, 56–58 (AFE), and 80–82 (AVI) contribute to the 5-amino-6-(D-ribitylamino)uracil site. 85 to 86 (NT) lines the (2S)-2-hydroxy-3-oxobutyl phosphate pocket. The Proton donor role is filled by H88. F113 contacts 5-amino-6-(D-ribitylamino)uracil. A (2S)-2-hydroxy-3-oxobutyl phosphate-binding site is contributed by R127.

This sequence belongs to the DMRL synthase family.

The enzyme catalyses (2S)-2-hydroxy-3-oxobutyl phosphate + 5-amino-6-(D-ribitylamino)uracil = 6,7-dimethyl-8-(1-D-ribityl)lumazine + phosphate + 2 H2O + H(+). It participates in cofactor biosynthesis; riboflavin biosynthesis; riboflavin from 2-hydroxy-3-oxobutyl phosphate and 5-amino-6-(D-ribitylamino)uracil: step 1/2. Catalyzes the formation of 6,7-dimethyl-8-ribityllumazine by condensation of 5-amino-6-(D-ribitylamino)uracil with 3,4-dihydroxy-2-butanone 4-phosphate. This is the penultimate step in the biosynthesis of riboflavin. This is 6,7-dimethyl-8-ribityllumazine synthase from Streptococcus pneumoniae serotype 2 (strain D39 / NCTC 7466).